Consider the following 131-residue polypeptide: Translation initiation factor 5A (131 aa).

Lysine 36 carries the post-translational modification Hypusine.

It belongs to the eIF-5A family. The N-terminus is blocked.

The protein resides in the cytoplasm. In terms of biological role, functions by promoting the formation of the first peptide bond. This chain is Translation initiation factor 5A (eif5a), found in Sulfolobus acidocaldarius (strain ATCC 33909 / DSM 639 / JCM 8929 / NBRC 15157 / NCIMB 11770).